The primary structure comprises 411 residues: Arginine deiminase (411 aa).

Catalysis depends on Cys401, which acts as the Amidino-cysteine intermediate.

The protein belongs to the arginine deiminase family.

It localises to the cytoplasm. It carries out the reaction L-arginine + H2O = L-citrulline + NH4(+). The protein operates within amino-acid degradation; L-arginine degradation via ADI pathway; carbamoyl phosphate from L-arginine: step 1/2. The sequence is that of Arginine deiminase from Streptococcus equi subsp. zooepidemicus (strain MGCS10565).